Reading from the N-terminus, the 857-residue chain is Thiamine repressible genes regulatory protein thi5 (857 aa).

Residues 38 to 64 constitute a DNA-binding region (zn(2)-C6 fungal-type); the sequence is CLSCRAKKIRCSGSEPCQACIATPSQC. Disordered stretches follow at residues 152–175 and 797–819; these read AVKS…NFSS and GHAL…HPSQ. Positions 159–175 are enriched in low complexity; it reads SFPSSSTPPSSDSNFSS. A compositionally biased stretch (polar residues) spans 803 to 819; the sequence is PESNNSSNSFKPSHPSQ.

The protein resides in the nucleus. Transcription factor that activates the nmt1 promoter. Regulation of thiamine repressible genes. Negatively regulates conjugation during meiosis, by inducing negative regulators which delay conjugation. Involved in thi1 regulation. The sequence is that of Thiamine repressible genes regulatory protein thi5 (thi5) from Schizosaccharomyces pombe (strain 972 / ATCC 24843) (Fission yeast).